Reading from the N-terminus, the 305-residue chain is UDP-3-O-acyl-N-acetylglucosamine deacetylase (305 aa).

Histidine 78, histidine 237, and aspartate 241 together coordinate Zn(2+). Histidine 264 acts as the Proton donor in catalysis.

It belongs to the LpxC family. Zn(2+) is required as a cofactor.

The enzyme catalyses a UDP-3-O-[(3R)-3-hydroxyacyl]-N-acetyl-alpha-D-glucosamine + H2O = a UDP-3-O-[(3R)-3-hydroxyacyl]-alpha-D-glucosamine + acetate. The protein operates within glycolipid biosynthesis; lipid IV(A) biosynthesis; lipid IV(A) from (3R)-3-hydroxytetradecanoyl-[acyl-carrier-protein] and UDP-N-acetyl-alpha-D-glucosamine: step 2/6. Functionally, catalyzes the hydrolysis of UDP-3-O-myristoyl-N-acetylglucosamine to form UDP-3-O-myristoylglucosamine and acetate, the committed step in lipid A biosynthesis. This chain is UDP-3-O-acyl-N-acetylglucosamine deacetylase, found in Burkholderia lata (strain ATCC 17760 / DSM 23089 / LMG 22485 / NCIMB 9086 / R18194 / 383).